Consider the following 111-residue polypeptide: Ribosome-binding factor A (111 aa).

Belongs to the RbfA family. Monomer. Binds 30S ribosomal subunits, but not 50S ribosomal subunits or 70S ribosomes.

The protein localises to the cytoplasm. In terms of biological role, one of several proteins that assist in the late maturation steps of the functional core of the 30S ribosomal subunit. Associates with free 30S ribosomal subunits (but not with 30S subunits that are part of 70S ribosomes or polysomes). Required for efficient processing of 16S rRNA. May interact with the 5'-terminal helix region of 16S rRNA. The sequence is that of Ribosome-binding factor A from Helicobacter pylori (strain HPAG1).